A 126-amino-acid chain; its full sequence is 13 kDa ribonucleoprotein-associated protein (126 aa).

The protein belongs to the eukaryotic ribosomal protein eL8 family. As to quaternary structure, component of the U3 snoRNP particle. Binds to the C'/D and B/C motifs in U3 snoRNA. Component of the 25S U4/U6.U5 tri-snRNP particle, a subcomplex of the spliceosome. Binds to the 5' stem-loop of U4 snRNA.

It is found in the nucleus. The protein localises to the nucleolus. In terms of biological role, common component of the spliceosome and rRNA processing machinery. In association with the spliceosomal U4/U6.U5 tri-snRNP particle, required for splicing of pre-mRNA. In association with box C/D snoRNPs, required for processing of pre-ribosomal RNA (rRNA) and site-specific 2'-O-methylation of substrate RNAs. Essential for the accumulation and stability of U4 snRNA, U6 snRNA, and box C/D snoRNAs. In Mycosarcoma maydis (Corn smut fungus), this protein is 13 kDa ribonucleoprotein-associated protein (SNU13).